Consider the following 612-residue polypeptide: Lipoma-preferred partner (612 aa).

2 disordered regions span residues 1–118 (MSHP…SSLD) and 132–219 (ECSS…SSRP). The span at 26–40 (THSFGNPSISVSTQQ) shows a compositional bias: polar residues. A compositionally biased stretch (low complexity) spans 41–53 (PPKKFAPVVAPKP). K108 carries the post-translational modification N6-acetyllysine. S116 and S151 each carry phosphoserine. 2 stretches are compositionally biased toward polar residues: residues 143–158 (QSST…STPV) and 171–181 (PLTATKKSTLK). The segment covering 183-193 (QPAPQAGPIPV) has biased composition (pro residues). A compositionally biased stretch (polar residues) spans 209–219 (SYTTASTSSRP). Phosphotyrosine is present on residues Y244 and Y301. The interval 307 to 387 (YGGRNDSDPT…LGPSSVAPSF (81 aa)) is disordered. Positions 314–323 (DPTYGQQGHP) are enriched in polar residues. K327 is covalently cross-linked (Glycyl lysine isopeptide (Lys-Gly) (interchain with G-Cter in SUMO1)). T333 is subject to Phosphothreonine. Residue S375 is modified to Phosphoserine. 3 LIM zinc-binding domains span residues 414–473 (GRCA…INTL), 474–534 (EQCN…KFAP), and 535–603 (RCSV…RIRV).

It belongs to the zyxin/ajuba family. As to quaternary structure, interacts with VASP, with PDZ domains of SCRIB and with ACTN1/alpha-actinin. Expressed in a wide variety of tissues but no or very low expression in brain and peripheral leukocytes.

It localises to the nucleus. The protein resides in the cytoplasm. It is found in the cell junction. The protein localises to the cell membrane. In terms of biological role, may play a structural role at sites of cell adhesion in maintaining cell shape and motility. In addition to these structural functions, it may also be implicated in signaling events and activation of gene transcription. May be involved in signal transduction from cell adhesion sites to the nucleus allowing successful integration of signals arising from soluble factors and cell-cell adhesion sites. Also suggested to serve as a scaffold protein upon which distinct protein complexes are assembled in the cytoplasm and in the nucleus. This is Lipoma-preferred partner (LPP) from Homo sapiens (Human).